The chain runs to 300 residues: GTPase Era (300 aa).

An Era-type G domain is found at 8-176 (RCGYVAIVGR…EGLIAKHLPE (169 aa)). A G1 region spans residues 16-23 (GRPNVGKS). 16-23 (GRPNVGKS) is a binding site for GTP. The segment at 42–46 (QTTRH) is G2. Residues 63–66 (DTPG) form a G3 region. Residues 63-67 (DTPGM) and 125-128 (NKTD) contribute to the GTP site. The interval 125–128 (NKTD) is G4. A G5 region spans residues 155 to 157 (VSA). In terms of domain architecture, KH type-2 spans 199 to 283 (VREKIMRQLG…MLNLWVKVKG (85 aa)).

It belongs to the TRAFAC class TrmE-Era-EngA-EngB-Septin-like GTPase superfamily. Era GTPase family. As to quaternary structure, monomer.

The protein localises to the cytoplasm. Its subcellular location is the cell inner membrane. In terms of biological role, an essential GTPase that binds both GDP and GTP, with rapid nucleotide exchange. Plays a role in 16S rRNA processing and 30S ribosomal subunit biogenesis and possibly also in cell cycle regulation and energy metabolism. The chain is GTPase Era from Pseudomonas fluorescens (strain ATCC BAA-477 / NRRL B-23932 / Pf-5).